The sequence spans 453 residues: Asparagine--tRNA ligase (453 aa).

It belongs to the class-II aminoacyl-tRNA synthetase family. In terms of assembly, homodimer.

The protein resides in the cytoplasm. The enzyme catalyses tRNA(Asn) + L-asparagine + ATP = L-asparaginyl-tRNA(Asn) + AMP + diphosphate + H(+). This is Asparagine--tRNA ligase from Malacoplasma penetrans (strain HF-2) (Mycoplasma penetrans).